A 59-amino-acid chain; its full sequence is Small integral membrane protein 30 (59 aa).

The signal sequence occupies residues 1-24 (MTSVSTQLSLVLMSLLLVLPVVEA). The Extracellular segment spans residues 25–29 (VEAGD). The chain crosses the membrane as a helical span at residues 30-50 (AIALLLGVVLSITGICACLGV). The Cytoplasmic segment spans residues 51–59 (YARKRNGQM).

In terms of assembly, interacts (via transmembrane domain) with antiviral protein MAVS (via transmembrane domain); the interaction disrupts MAVS interaction with RIGI and inhibits MAVS aggregation, resulting in the repression of type I interferon signaling and innate immune responses.

The protein resides in the endoplasmic reticulum membrane. It is found in the mitochondrion membrane. Negatively regulates antiviral innate immune responses. Disrupts the interaction of antiviral protein MAVS with innate immune receptor RIGI and inhibits MAVS aggregation, resulting in the repression of type I interferon signaling and innate immune responses. The polypeptide is Small integral membrane protein 30 (Homo sapiens (Human)).